A 390-amino-acid chain; its full sequence is Cystathionine beta-lyase (390 aa).

Lys202 carries the post-translational modification N6-(pyridoxal phosphate)lysine.

The protein belongs to the trans-sulfuration enzymes family. Pyridoxal 5'-phosphate is required as a cofactor.

It is found in the cytoplasm. The protein localises to the nucleus. It catalyses the reaction L,L-cystathionine + H2O = L-homocysteine + pyruvate + NH4(+). It carries out the reaction an S-substituted L-cysteine + H2O = a thiol + pyruvate + NH4(+). It participates in amino-acid biosynthesis; L-methionine biosynthesis via de novo pathway; L-homocysteine from L-cystathionine: step 1/1. The polypeptide is Cystathionine beta-lyase (str3) (Schizosaccharomyces pombe (strain 972 / ATCC 24843) (Fission yeast)).